Reading from the N-terminus, the 34-residue chain is Photosystem II reaction center protein T (34 aa).

A helical membrane pass occupies residues 3 to 23; it reads ALVYTFLLVSTLGIIFFAIFF.

This sequence belongs to the PsbT family. As to quaternary structure, PSII is composed of 1 copy each of membrane proteins PsbA, PsbB, PsbC, PsbD, PsbE, PsbF, PsbH, PsbI, PsbJ, PsbK, PsbL, PsbM, PsbT, PsbY, PsbZ, Psb30/Ycf12, at least 3 peripheral proteins of the oxygen-evolving complex and a large number of cofactors. It forms dimeric complexes.

The protein localises to the plastid. It localises to the chloroplast thylakoid membrane. In terms of biological role, found at the monomer-monomer interface of the photosystem II (PS II) dimer, plays a role in assembly and dimerization of PSII. PSII is a light-driven water plastoquinone oxidoreductase, using light energy to abstract electrons from H(2)O, generating a proton gradient subsequently used for ATP formation. This is Photosystem II reaction center protein T from Solanum bulbocastanum (Wild potato).